The primary structure comprises 635 residues: Threonine--tRNA ligase (635 aa).

The 61-residue stretch at 1–61 folds into the TGS domain; that stretch reads MINISLSDGS…ENNCKLRILT (61 aa). Residues 242 to 533 form a catalytic region; the sequence is DHRKLGRELD…LIEEYAGCFP (292 aa). Residues Cys333, His384, and His510 each contribute to the Zn(2+) site.

It belongs to the class-II aminoacyl-tRNA synthetase family. In terms of assembly, homodimer. It depends on Zn(2+) as a cofactor.

Its subcellular location is the cytoplasm. It catalyses the reaction tRNA(Thr) + L-threonine + ATP = L-threonyl-tRNA(Thr) + AMP + diphosphate + H(+). Functionally, catalyzes the attachment of threonine to tRNA(Thr) in a two-step reaction: L-threonine is first activated by ATP to form Thr-AMP and then transferred to the acceptor end of tRNA(Thr). Also edits incorrectly charged L-seryl-tRNA(Thr). This is Threonine--tRNA ligase from Rickettsia canadensis (strain McKiel).